A 331-amino-acid polypeptide reads, in one-letter code: UBX domain-containing protein 2B (331 aa).

Composition is skewed to basic and acidic residues over residues 1–16 and 37–48; these read MAEG…ERGS and DEMKCKSSKPDR. Residues 1–70 form a disordered region; that stretch reads MAEGGRAEPE…PHRLYSGDHK (70 aa). Residue Ala2 is modified to N-acetylalanine. At Ser56 the chain carries Phosphoserine. Position 59 is a phosphothreonine (Thr59). At Ser66 the chain carries Phosphoserine. Residues 141–206 enclose the SEP domain; sequence DVQVLLKLWR…MEDHQDQEYI (66 aa). A phosphoserine mark is found at Ser231, Ser234, and Ser235. The region spanning 252–329 is the UBX domain; sequence DSMPTTKIQI…DILNTVILQQ (78 aa).

It belongs to the NSFL1C family. Interacts with VCP. Does not bind ubiquitin.

The protein localises to the nucleus. It localises to the cytoplasm. Its subcellular location is the cytosol. It is found in the endoplasmic reticulum. The protein resides in the golgi apparatus. The protein localises to the cytoskeleton. It localises to the microtubule organizing center. Its subcellular location is the centrosome. Adapter protein required for Golgi and endoplasmic reticulum biogenesis. Involved in Golgi and endoplasmic reticulum maintenance during interphase and in their reassembly at the end of mitosis. The complex formed with VCP has membrane fusion activity; membrane fusion activity requires USO1-GOLGA2 tethering and BET1L. VCPIP1 is also required, but not its deubiquitinating activity. Together with NSFL1C/p47, regulates the centrosomal levels of kinase AURKA/Aurora A during mitotic progression by promoting AURKA removal from centrosomes in prophase. Also, regulates spindle orientation during mitosis. The chain is UBX domain-containing protein 2B (Ubxn2b) from Mus musculus (Mouse).